The chain runs to 819 residues: Zinc finger protein 658B (819 aa).

The C2H2-type 1; degenerate zinc finger occupies 141-166; that stretch reads YLSDEHGKCRKSFYWKAHLIQHERPH. 14 C2H2-type zinc fingers span residues 200–222, 278–300, 306–328, 334–356, 362–384, 390–412, 418–440, 446–468, 474–496, 502–524, 530–552, 558–580, 586–608, and 614–636; these read YECNECGKAFCQNSNLSKHLRIH, YECIECGKTFSKTSHLRAHQRIH, YECVECEKTFSHKTHLSVHQRVH, YECNDCGKSFTYNSALRAHQRIH, YECSDCEKTFAHNSALRAHHRIH, YECNECGRSFAHISVLKAHQRIH, YECNECGRSFTYNSALRAHQRIH, YECSDCEKTFAHNSALKIHQRIH, YKCNECEKTFAHNSALRAHQNIH, YECSECGKTFFQKTRLSTHRRIH, YECSKCGKTFSQKSYLSGHERIH, YECNVCGKTFVYKAALIVHQRIH, YECNECGKTFSQRTHLCAHQRIH, and YECNECGKTFADNSALRAHHRIH. The segment at 642 to 664 adopts a C2H2-type 16; degenerate zinc-finger fold; it reads YECNDCGKTFSKTSHLRAHLRTR. C2H2-type zinc fingers lie at residues 670–692, 698–720, 726–748, 754–776, and 782–805; these read YECSECGKTFSEKSYVSAHQRVH, YECNVCGKPFAHNSTLRVHQRIH, YECNDCGKTFSQKSHLSAHQRIH, YECNECGKAFAQNSTLRVHQRIH, and YECDECGKTFVRKAALRVHHTRMH.

It belongs to the krueppel C2H2-type zinc-finger protein family.

Its subcellular location is the nucleus. In terms of biological role, may be involved in transcriptional regulation. The chain is Zinc finger protein 658B (ZNF658B) from Homo sapiens (Human).